The chain runs to 265 residues: Glutamate racemase (265 aa).

Substrate is bound by residues 12-13 (DS) and 44-45 (YG). C75 functions as the Proton donor/acceptor in the catalytic mechanism. 76–77 (NT) provides a ligand contact to substrate. C186 serves as the catalytic Proton donor/acceptor. 187 to 188 (TH) is a substrate binding site.

Belongs to the aspartate/glutamate racemases family.

The enzyme catalyses L-glutamate = D-glutamate. It functions in the pathway cell wall biogenesis; peptidoglycan biosynthesis. Provides the (R)-glutamate required for cell wall biosynthesis. The polypeptide is Glutamate racemase (Pseudomonas putida (strain ATCC 700007 / DSM 6899 / JCM 31910 / BCRC 17059 / LMG 24140 / F1)).